Reading from the N-terminus, the 81-residue chain is Large ribosomal subunit protein bL31B (81 aa).

It belongs to the bacterial ribosomal protein bL31 family. Type B subfamily. In terms of assembly, part of the 50S ribosomal subunit.

This chain is Large ribosomal subunit protein bL31B, found in Borreliella afzelii (strain PKo) (Borrelia afzelii).